We begin with the raw amino-acid sequence, 192 residues long: NADH-quinone oxidoreductase subunit B (192 aa).

Residues Cys71, Cys72, Cys136, and Cys166 each contribute to the [4Fe-4S] cluster site.

This sequence belongs to the complex I 20 kDa subunit family. In terms of assembly, NDH-1 is composed of 14 different subunits. Subunits NuoB, C, D, E, F, and G constitute the peripheral sector of the complex. It depends on [4Fe-4S] cluster as a cofactor.

The protein resides in the cell inner membrane. It catalyses the reaction a quinone + NADH + 5 H(+)(in) = a quinol + NAD(+) + 4 H(+)(out). NDH-1 shuttles electrons from NADH, via FMN and iron-sulfur (Fe-S) centers, to quinones in the respiratory chain. Couples the redox reaction to proton translocation (for every two electrons transferred, four hydrogen ions are translocated across the cytoplasmic membrane), and thus conserves the redox energy in a proton gradient. The chain is NADH-quinone oxidoreductase subunit B from Azorhizobium caulinodans (strain ATCC 43989 / DSM 5975 / JCM 20966 / LMG 6465 / NBRC 14845 / NCIMB 13405 / ORS 571).